The primary structure comprises 884 residues: Androgen receptor (884 aa).

The tract at residues 1 to 522 is modulating; that stretch reads MEVQLGLGRV…PIDYYFPPQK (522 aa). Residues 1 to 551 form an interaction with ZNF318 region; sequence MEVQLGLGRV…GSCKVFFKRA (551 aa). 2 disordered regions span residues 33 to 145 and 174 to 207; these read VIQN…TLSL and QQQQ…YLGG. Composition is skewed to low complexity over residues 55–79 and 174–196; these read QQQQ…PQAQ and QQQQ…AAGA. The residue at position 61 (serine 61) is a Phosphoserine; by CDK9. Position 75 is a phosphoserine (serine 75). Over residues 197–207 the composition is skewed to polar residues; it reads PTSSKDSYLGG. At tyrosine 204 the chain carries Phosphotyrosine; by CSK. Position 237 is a phosphoserine (serine 237). Position 248 is a phosphotyrosine; by CSK and TNK2 (tyrosine 248). A disordered region spans residues 275–294; the sequence is DDSADKGTEEPAEYTPFKGS. 4 positions are modified to phosphotyrosine; by CSK: tyrosine 288, tyrosine 327, tyrosine 338, and tyrosine 343. Tyrosine 344 carries the phosphotyrosine; by CSK and TNK2 modification. Lysine 367 is covalently cross-linked (Glycyl lysine isopeptide (Lys-Gly) (interchain with G-Cter in SUMO)). Tyrosine 374 bears the Phosphotyrosine; by CSK mark. Residue lysine 485 forms a Glycyl lysine isopeptide (Lys-Gly) (interchain with G-Cter in SUMO) linkage. A phosphotyrosine; by CSK mark is found at tyrosine 499 and tyrosine 516. The interval 516–883 is interaction with LPXN; it reads YYFPPQKTCL…GKVKPIYFHT (368 aa). The nuclear receptor DNA-binding region spans 523-596; it reads TCLICGDEAS…AGMTLGARKL (74 aa). 2 NR C4-type zinc fingers span residues 524-544 and 560-584; these read CLIC…CGSC and CASR…LRKC. The tract at residues 536-626 is interaction with HIPK3; it reads YGALTCGSCK…TEESSQKLTV (91 aa). The interval 556-883 is interaction with CCAR1; that stretch reads QKYLCASRND…GKVKPIYFHT (328 aa). Positions 589 to 883 are interaction with KAT7; that stretch reads MTLGARKLKK…GKVKPIYFHT (295 aa). Phosphoserine; by STK4/MST1 is present on serine 615. One can recognise an NR LBD domain in the interval 633-864; it reads ECQPIFLNVL…DFPEMMAEII (232 aa). Positions 670 and 717 each coordinate 17beta-hydroxy-5alpha-androstan-3-one. Residues lysine 810 and lysine 812 each participate in a glycyl lysine isopeptide (Lys-Gly) (interchain with G-Cter in ubiquitin) cross-link. Threonine 842 is a 17beta-hydroxy-5alpha-androstan-3-one binding site. Residue tyrosine 880 is modified to Phosphotyrosine; by CSK.

It belongs to the nuclear hormone receptor family. NR3 subfamily. Binds DNA as a homodimer. Part of a ternary complex containing AR, EFCAB6/DJBP and PARK7. Interacts with HIPK3 and NR0B2 in the presence of androgen. The ligand binding domain interacts with KAT7/HBO1 in the presence of dihydrotestosterone. Interacts with EFCAB6/DJBP, PQBP1, RANBP9, RBAK, SPDEF, SRA1, TGFB1I1 and RREB1. Interacts with ZMIZ1/ZIMP10 and ZMIZ2/ZMIP7 which both enhance its transactivation activity. Interacts with SLC30A9 and RAD54L2/ARIP4. Interacts with MACROD1 (via macro domain). Interacts via the ligand-binding domain with LXXLL and FXXLF motifs from NCOA1, NCOA2, NCOA3 and MAGEA11. Interacts (via nuclear receptor DNA binding domain and nuclear receptor ligand binding domain) with NCOA4. The AR N-terminal poly-Gln region binds Ran resulting in enhancement of AR-mediated transactivation. Ran-binding decreases as the poly-Gln length increases. Interacts with HIP1 (via coiled coil domain). Interacts (via ligand-binding domain) with TRIM68. Interacts with TNK2. Interacts with USP26. Interacts with RNF6. Interacts (regulated by RNF6 probably through polyubiquitination) with RNF14; regulates AR transcriptional activity. Interacts with PRMT2 and TRIM24. Interacts with RACK1. Interacts with RANBP10; this interaction enhances dihydrotestosterone-induced AR transcriptional activity. Interacts with PRPF6 in a hormone-independent way; this interaction enhances dihydrotestosterone-induced AR transcriptional activity. Interacts with STK4/MST1. Interacts with ZIPK/DAPK3. Interacts with LPXN. Interacts with MAK. Part of a complex containing AR, MAK and NCOA3. Interacts with CRY1. Interacts with CCAR1 and GATA2. Interacts with ZNF318. Interacts with BUD31. Interacts with ARID4A. Interacts with ARID4B. Interacts (via NR LBD domain) with ZBTB7A; the interaction is direct and androgen-dependent. Interacts with NCOR1. Interacts with NCOR2. Interacts with CRY2 in a ligand-dependent manner. In terms of processing, phosphorylated in prostate cancer cells in response to several growth factors including EGF. Phosphorylation is induced by c-Src kinase (CSK). Tyr-499 is one of the major phosphorylation sites and an increase in phosphorylation and Src kinase activity is associated with prostate cancer progression. Phosphorylation by TNK2 enhances the DNA-binding and transcriptional activity. Phosphorylation at Ser-61 by CDK9 regulates AR promoter selectivity and cell growth. Post-translationally, sumoylated on Lys-367 (major) and Lys-485. Ubiquitinated. Deubiquitinated by USP26. 'Lys-6' and 'Lys-27'-linked polyubiquitination by RNF6 modulates AR transcriptional activity and specificity. Palmitoylated by ZDHHC7 and ZDHHC21. Palmitoylation is required for plasma membrane targeting and for rapid intracellular signaling via ERK and AKT kinases and cAMP generation.

The protein localises to the nucleus. Its subcellular location is the cytoplasm. Steroid hormone receptors are ligand-activated transcription factors that regulate eukaryotic gene expression and affect cellular proliferation and differentiation in target tissues. Transcription factor activity is modulated by bound coactivator and corepressor proteins like ZBTB7A that recruits NCOR1 and NCOR2 to the androgen response elements/ARE on target genes, negatively regulating androgen receptor signaling and androgen-induced cell proliferation. Transcription activation is also down-regulated by NR0B2. Activated, but not phosphorylated, by HIPK3 and ZIPK/DAPK3. The protein is Androgen receptor (AR) of Eulemur fulvus collaris (Collared brown lemur).